Here is a 274-residue protein sequence, read N- to C-terminus: Isoprenyl transferase (274 aa).

Residue D49 is part of the active site. D49 contributes to the Mg(2+) binding site. Residues 50–53 (GNRR), F54, R62, H66, and 94–96 (STD) each bind substrate. N97 acts as the Proton acceptor in catalysis. Substrate contacts are provided by residues R100, R223, and 229 to 231 (RLS). E242 is a binding site for Mg(2+).

Belongs to the UPP synthase family. Homodimer. Mg(2+) serves as cofactor.

Catalyzes the condensation of isopentenyl diphosphate (IPP) with allylic pyrophosphates generating different type of terpenoids. The chain is Isoprenyl transferase from Deinococcus radiodurans (strain ATCC 13939 / DSM 20539 / JCM 16871 / CCUG 27074 / LMG 4051 / NBRC 15346 / NCIMB 9279 / VKM B-1422 / R1).